The primary structure comprises 152 residues: Protein-export protein SecB (152 aa).

The protein belongs to the SecB family. Homotetramer, a dimer of dimers. One homotetramer interacts with 1 SecA dimer.

It localises to the cytoplasm. Its function is as follows. One of the proteins required for the normal export of preproteins out of the cell cytoplasm. It is a molecular chaperone that binds to a subset of precursor proteins, maintaining them in a translocation-competent state. It also specifically binds to its receptor SecA. The sequence is that of Protein-export protein SecB from Rickettsia typhi (strain ATCC VR-144 / Wilmington).